A 637-amino-acid polypeptide reads, in one-letter code: tRNA uridine 5-carboxymethylaminomethyl modification enzyme MnmG (637 aa).

Gly-14–Gly-19 contacts FAD. Residue Gly-279–Phe-293 coordinates NAD(+).

This sequence belongs to the MnmG family. In terms of assembly, homodimer. Heterotetramer of two MnmE and two MnmG subunits. The cofactor is FAD.

It localises to the cytoplasm. NAD-binding protein involved in the addition of a carboxymethylaminomethyl (cmnm) group at the wobble position (U34) of certain tRNAs, forming tRNA-cmnm(5)s(2)U34. In Desulfitobacterium hafniense (strain Y51), this protein is tRNA uridine 5-carboxymethylaminomethyl modification enzyme MnmG.